We begin with the raw amino-acid sequence, 265 residues long: MAINIIVAGPRGRMGYEAVQMITKEDSFRLVACLDHKHDGLNLGELEQFSDDLQVPIYTDIDSCLKQHQADVFVDLTTPEVGYKHTKTALEYKVRPVVGTTGFTDEQLSELKELSKQQQRGCIIAPNFAIGAVLMMKFSKMAAKYFPNVEIIEKHHDQKLDAPSGTAKKTAELIQDVRESQKQGHPKEEETLPGARGADMDGMRIHSMRLPGLVAHQEVIFGGAGQTLTISHDSMNRASFMDGIRECVNQVMDLEELVYGLENLL.

9 to 14 (GPRGRM) serves as a coordination point for NAD(+). Residue Lys37 coordinates NADP(+). Residues 99-101 (GTT) and 125-128 (APNF) each bind NAD(+). Catalysis depends on His155, which acts as the Proton donor/acceptor. His156 contributes to the (S)-2,3,4,5-tetrahydrodipicolinate binding site. Lys159 (proton donor) is an active-site residue. 165–166 (GT) contacts (S)-2,3,4,5-tetrahydrodipicolinate. Over residues 178–190 (RESQKQGHPKEEE) the composition is skewed to basic and acidic residues. The disordered stretch occupies residues 178-200 (RESQKQGHPKEEETLPGARGADM).

The protein belongs to the DapB family.

The protein localises to the cytoplasm. It catalyses the reaction (S)-2,3,4,5-tetrahydrodipicolinate + NAD(+) + H2O = (2S,4S)-4-hydroxy-2,3,4,5-tetrahydrodipicolinate + NADH + H(+). It carries out the reaction (S)-2,3,4,5-tetrahydrodipicolinate + NADP(+) + H2O = (2S,4S)-4-hydroxy-2,3,4,5-tetrahydrodipicolinate + NADPH + H(+). The protein operates within amino-acid biosynthesis; L-lysine biosynthesis via DAP pathway; (S)-tetrahydrodipicolinate from L-aspartate: step 4/4. Functionally, catalyzes the conversion of 4-hydroxy-tetrahydrodipicolinate (HTPA) to tetrahydrodipicolinate. The polypeptide is 4-hydroxy-tetrahydrodipicolinate reductase (Oceanobacillus iheyensis (strain DSM 14371 / CIP 107618 / JCM 11309 / KCTC 3954 / HTE831)).